A 163-amino-acid polypeptide reads, in one-letter code: Large ribosomal subunit protein uL10 (163 aa).

The protein belongs to the universal ribosomal protein uL10 family. Part of the ribosomal stalk of the 50S ribosomal subunit. The N-terminus interacts with L11 and the large rRNA to form the base of the stalk. The C-terminus forms an elongated spine to which L12 dimers bind in a sequential fashion forming a multimeric L10(L12)X complex.

Functionally, forms part of the ribosomal stalk, playing a central role in the interaction of the ribosome with GTP-bound translation factors. The protein is Large ribosomal subunit protein uL10 of Histophilus somni (strain 2336) (Haemophilus somnus).